The following is a 469-amino-acid chain: GTPase Der (469 aa).

EngA-type G domains follow at residues 3-166 (PVIA…PEDE) and 177-350 (LRLA…ESAN). GTP-binding positions include 9–16 (GRPNVGKS), 56–60 (DTGGI), 118–121 (NKVD), 183–190 (GRPNVGKS), 230–234 (DTAGV), and 295–298 (NKWD). The KH-like domain occupies 351 to 435 (LKVSPAKLTQ…PVKIEFKTSE (85 aa)).

This sequence belongs to the TRAFAC class TrmE-Era-EngA-EngB-Septin-like GTPase superfamily. EngA (Der) GTPase family. As to quaternary structure, associates with the 50S ribosomal subunit.

Its function is as follows. GTPase that plays an essential role in the late steps of ribosome biogenesis. This Acinetobacter baumannii (strain SDF) protein is GTPase Der.